A 100-amino-acid polypeptide reads, in one-letter code: Small ribosomal subunit protein uS14c (100 aa).

Positions 28–45 are enriched in basic and acidic residues; sequence KKEIKKVPSLSEKMEIHG. The segment at 28–59 is disordered; it reads KKEIKKVPSLSEKMEIHGKLQSPPRNSAPTRL.

The protein belongs to the universal ribosomal protein uS14 family. In terms of assembly, part of the 30S ribosomal subunit.

It is found in the plastid. The protein localises to the chloroplast. Binds 16S rRNA, required for the assembly of 30S particles. This Nandina domestica (Heavenly bamboo) protein is Small ribosomal subunit protein uS14c.